An 85-amino-acid polypeptide reads, in one-letter code: RNA-binding protein Hfq (85 aa).

Residues 11–71 (DTFLNHVRKS…ISTIMPGHPV (61 aa)) form the Sm domain.

This sequence belongs to the Hfq family. As to quaternary structure, homohexamer.

RNA chaperone that binds small regulatory RNA (sRNAs) and mRNAs to facilitate mRNA translational regulation in response to envelope stress, environmental stress and changes in metabolite concentrations. Also binds with high specificity to tRNAs. Seems to be involved in the regulation of NifA. The protein is RNA-binding protein Hfq of Azorhizobium caulinodans (strain ATCC 43989 / DSM 5975 / JCM 20966 / LMG 6465 / NBRC 14845 / NCIMB 13405 / ORS 571).